Consider the following 452-residue polypeptide: Prephenate dehydrogenase [NADP(+)] (452 aa).

Residue 14–43 (KVIGIIGLGDMGLLYANKFTDAGWGVICCD) participates in NADP(+) binding. A Prephenate/arogenate dehydrogenase domain is found at 14–297 (KVIGIIGLGD…GKHTGLLLLD (284 aa)).

The protein belongs to the prephenate/arogenate dehydrogenase family.

It catalyses the reaction prephenate + NADP(+) = 3-(4-hydroxyphenyl)pyruvate + CO2 + NADPH. It functions in the pathway amino-acid biosynthesis; L-tyrosine biosynthesis; (4-hydroxyphenyl)pyruvate from prephenate (NADP(+) route): step 1/1. This is Prephenate dehydrogenase [NADP(+)] (TYR1) from Saccharomyces cerevisiae (strain ATCC 204508 / S288c) (Baker's yeast).